Consider the following 237-residue polypeptide: Uridylate kinase (237 aa).

12 to 15 is a binding site for ATP; it reads KLSG. An involved in allosteric activation by GTP region spans residues 20 to 25; the sequence is GENGFG. Gly-54 provides a ligand contact to UMP. 2 residues coordinate ATP: Gly-55 and Arg-59. UMP-binding positions include Asp-72 and 133–140; that span reads TGNPYFST. ATP is bound by residues Tyr-166 and Asp-169.

The protein belongs to the UMP kinase family. As to quaternary structure, homohexamer.

It localises to the cytoplasm. It carries out the reaction UMP + ATP = UDP + ADP. The protein operates within pyrimidine metabolism; CTP biosynthesis via de novo pathway; UDP from UMP (UMPK route): step 1/1. With respect to regulation, allosterically activated by GTP. Inhibited by UTP. Catalyzes the reversible phosphorylation of UMP to UDP. In Clostridium perfringens (strain SM101 / Type A), this protein is Uridylate kinase.